A 427-amino-acid polypeptide reads, in one-letter code: Tyrosine--tRNA ligase (427 aa).

Tyr33 is an L-tyrosine binding site. Positions 38 to 47 (PTASSLTIGN) match the 'HIGH' region motif. Residues Tyr168 and Gln172 each coordinate L-tyrosine. Residues 228-232 (KFGKS) carry the 'KMSKS' region motif. Lys231 serves as a coordination point for ATP. Residues 361 to 427 (LDLLSTLTNS…KKNYYLLRFN (67 aa)) enclose the S4 RNA-binding domain.

This sequence belongs to the class-I aminoacyl-tRNA synthetase family. TyrS type 1 subfamily. In terms of assembly, homodimer.

The protein resides in the cytoplasm. It carries out the reaction tRNA(Tyr) + L-tyrosine + ATP = L-tyrosyl-tRNA(Tyr) + AMP + diphosphate + H(+). Its function is as follows. Catalyzes the attachment of tyrosine to tRNA(Tyr) in a two-step reaction: tyrosine is first activated by ATP to form Tyr-AMP and then transferred to the acceptor end of tRNA(Tyr). The sequence is that of Tyrosine--tRNA ligase from Cytophaga hutchinsonii (strain ATCC 33406 / DSM 1761 / CIP 103989 / NBRC 15051 / NCIMB 9469 / D465).